The chain runs to 172 residues: Protein GrpE (172 aa).

This sequence belongs to the GrpE family. Homodimer.

The protein localises to the cytoplasm. Functionally, participates actively in the response to hyperosmotic and heat shock by preventing the aggregation of stress-denatured proteins, in association with DnaK and GrpE. It is the nucleotide exchange factor for DnaK and may function as a thermosensor. Unfolded proteins bind initially to DnaJ; upon interaction with the DnaJ-bound protein, DnaK hydrolyzes its bound ATP, resulting in the formation of a stable complex. GrpE releases ADP from DnaK; ATP binding to DnaK triggers the release of the substrate protein, thus completing the reaction cycle. Several rounds of ATP-dependent interactions between DnaJ, DnaK and GrpE are required for fully efficient folding. This Thermotoga petrophila (strain ATCC BAA-488 / DSM 13995 / JCM 10881 / RKU-1) protein is Protein GrpE.